The sequence spans 115 residues: Small ribosomal subunit protein uS14m (115 aa).

This sequence belongs to the universal ribosomal protein uS14 family. As to quaternary structure, component of the mitochondrial small ribosomal subunit (mt-SSU). Mature yeast 74S mitochondrial ribosomes consist of a small (37S) and a large (54S) subunit. The 37S small subunit contains a 15S ribosomal RNA (15S mt-rRNA) and 34 different proteins. The 54S large subunit contains a 21S rRNA (21S mt-rRNA) and 46 different proteins.

Its subcellular location is the mitochondrion. Component of the mitochondrial ribosome (mitoribosome), a dedicated translation machinery responsible for the synthesis of mitochondrial genome-encoded proteins, including at least some of the essential transmembrane subunits of the mitochondrial respiratory chain. The mitoribosomes are attached to the mitochondrial inner membrane and translation products are cotranslationally integrated into the membrane. The sequence is that of Small ribosomal subunit protein uS14m (MRP2) from Saccharomyces cerevisiae (strain ATCC 204508 / S288c) (Baker's yeast).